Here is a 172-residue protein sequence, read N- to C-terminus: Ribosome maturation factor RimP (172 aa).

Belongs to the RimP family.

The protein resides in the cytoplasm. Its function is as follows. Required for maturation of 30S ribosomal subunits. The polypeptide is Ribosome maturation factor RimP (Nitratidesulfovibrio vulgaris (strain ATCC 29579 / DSM 644 / CCUG 34227 / NCIMB 8303 / VKM B-1760 / Hildenborough) (Desulfovibrio vulgaris)).